A 78-amino-acid polypeptide reads, in one-letter code: UPF0291 protein LBUL_1264 (78 aa).

It belongs to the UPF0291 family.

It is found in the cytoplasm. The sequence is that of UPF0291 protein LBUL_1264 from Lactobacillus delbrueckii subsp. bulgaricus (strain ATCC BAA-365 / Lb-18).